The following is a 174-amino-acid chain: Crossover junction endodeoxyribonuclease RuvC (174 aa).

Active-site residues include Asp-8, Glu-69, and Asp-141. Mg(2+) is bound by residues Asp-8, Glu-69, and Asp-141.

The protein belongs to the RuvC family. As to quaternary structure, homodimer which binds Holliday junction (HJ) DNA. The HJ becomes 2-fold symmetrical on binding to RuvC with unstacked arms; it has a different conformation from HJ DNA in complex with RuvA. In the full resolvosome a probable DNA-RuvA(4)-RuvB(12)-RuvC(2) complex forms which resolves the HJ. Mg(2+) is required as a cofactor.

The protein resides in the cytoplasm. It catalyses the reaction Endonucleolytic cleavage at a junction such as a reciprocal single-stranded crossover between two homologous DNA duplexes (Holliday junction).. Its function is as follows. The RuvA-RuvB-RuvC complex processes Holliday junction (HJ) DNA during genetic recombination and DNA repair. Endonuclease that resolves HJ intermediates. Cleaves cruciform DNA by making single-stranded nicks across the HJ at symmetrical positions within the homologous arms, yielding a 5'-phosphate and a 3'-hydroxyl group; requires a central core of homology in the junction. The consensus cleavage sequence is 5'-(A/T)TT(C/G)-3'. Cleavage occurs on the 3'-side of the TT dinucleotide at the point of strand exchange. HJ branch migration catalyzed by RuvA-RuvB allows RuvC to scan DNA until it finds its consensus sequence, where it cleaves and resolves the cruciform DNA. This is Crossover junction endodeoxyribonuclease RuvC from Xanthomonas euvesicatoria pv. vesicatoria (strain 85-10) (Xanthomonas campestris pv. vesicatoria).